A 175-amino-acid polypeptide reads, in one-letter code: Regenerating islet-derived protein 3-beta (175 aa).

The signal sequence occupies residues 1–26 (MLHRLAFPVMSWMLLSCLMLLSQVQG). The propeptide occupies 27-37 (EDSPKKIPSAR). Intrachain disulfides connect cysteine 40–cysteine 51, cysteine 68–cysteine 171, and cysteine 146–cysteine 163. In terms of domain architecture, C-type lectin spans 47 to 172 (YGSYCYALFQ…CEVKLPYVCK (126 aa)). Histidine 107 contributes to the Zn(2+) binding site. Residues 114 to 116 (EPN) carry the EPN motif. Glutamate 121 contacts Zn(2+).

Forms a hexameric membrane-permeabilizing oligomeric pore on membrane phospholipids. The hexamer is formed by three dimers related by helical symmetry. Forms filaments, filamentation traps pore complexes and limits damage to host cells. Interacts with EXTL3. Post-translationally, proteolytic processing by trypsin removes an inhibitory N-terminal propeptide and is essential for peptidoglycan binding and antibacterial activity. Constitutively expressed in intestine.

It is found in the secreted. With respect to regulation, lipopolysaccharide inhibits pore-forming activity, explaining why is bactericidal for Gram-positive but not Gram-negative bacteria. Bactericidal C-type lectin which acts against several intestinal Gram-positive bacteria and Gram-negative bacteria. Lacks antibacterial activity against S.typhimurium. May play a role in protection against infection with S.enteritidis by inhibiting its translocation from the gut lumen into intestinal tissues and further extraintestinal tissues. Its function is as follows. Acts as a hormone in response to different stimuli. Secreted by different cell types to activate its receptor EXTL3 and induce cell specific signaling pathways. In pancreas, is able stimulate cell proliferation. The sequence is that of Regenerating islet-derived protein 3-beta from Rattus norvegicus (Rat).